Here is a 291-residue protein sequence, read N- to C-terminus: ATP synthase gamma chain (291 aa).

The protein belongs to the ATPase gamma chain family. As to quaternary structure, F-type ATPases have 2 components, CF(1) - the catalytic core - and CF(0) - the membrane proton channel. CF(1) has five subunits: alpha(3), beta(3), gamma(1), delta(1), epsilon(1). CF(0) has three main subunits: a, b and c.

Its subcellular location is the cell inner membrane. Functionally, produces ATP from ADP in the presence of a proton gradient across the membrane. The gamma chain is believed to be important in regulating ATPase activity and the flow of protons through the CF(0) complex. The protein is ATP synthase gamma chain of Variovorax paradoxus (strain S110).